Consider the following 223-residue polypeptide: Fibroblast growth factor-binding protein 2 (223 aa).

An N-terminal signal peptide occupies residues 1–19 (MKFVPCLLLVTLSCLGTLG). A disordered region spans residues 23-45 (RQKQGSTGEEFHFQTGGRDSCTM). 3 cysteine pairs are disulfide-bonded: cysteine 43/cysteine 63, cysteine 72/cysteine 106, and cysteine 81/cysteine 117. The tract at residues 120–201 (AGPQAHMQQV…PGGNEEAKKK (82 aa)) is disordered. Residues 125 to 144 (HMQQVTSSLKGSPEPNQQPE) show a composition bias toward polar residues. Over residues 175–186 (AKPTTRPTAKPT) the composition is skewed to low complexity. Cysteine 206 and cysteine 214 are disulfide-bonded.

The protein belongs to the fibroblast growth factor-binding protein family. In terms of tissue distribution, expressed in serum, peripheral leukocytes and cytotoxic T-lymphocytes, but not in granulocytes and monocytes (at protein level).

The protein localises to the secreted. It localises to the extracellular space. This Homo sapiens (Human) protein is Fibroblast growth factor-binding protein 2 (FGFBP2).